The sequence spans 432 residues: Enolase (432 aa).

Gln-164 serves as a coordination point for (2R)-2-phosphoglycerate. Catalysis depends on Glu-206, which acts as the Proton donor. Mg(2+) contacts are provided by Asp-243, Glu-289, and Asp-316. 4 residues coordinate (2R)-2-phosphoglycerate: Lys-341, Arg-370, Ser-371, and Lys-392. The active-site Proton acceptor is the Lys-341.

This sequence belongs to the enolase family. Requires Mg(2+) as cofactor.

It localises to the cytoplasm. The protein resides in the secreted. The protein localises to the cell surface. The catalysed reaction is (2R)-2-phosphoglycerate = phosphoenolpyruvate + H2O. It participates in carbohydrate degradation; glycolysis; pyruvate from D-glyceraldehyde 3-phosphate: step 4/5. Functionally, catalyzes the reversible conversion of 2-phosphoglycerate (2-PG) into phosphoenolpyruvate (PEP). It is essential for the degradation of carbohydrates via glycolysis. This Borrelia duttonii (strain Ly) protein is Enolase.